Consider the following 364-residue polypeptide: SH3 and cysteine-rich domain-containing protein 3 (364 aa).

Disordered stretches follow at residues 1-89 (MTEK…NDKP) and 189-244 (NKER…HKQP). The segment covering 64 to 78 (YEEEEEEEEEEEEPP) has biased composition (acidic residues). Residues 89-140 (PHKFKDHFFKKPKFCDVCARMIVLNNKFGLRCKNCKTNIHEHCQSYVEMQRC) form a Phorbol-ester/DAG-type zinc finger. Basic and acidic residues predominate over residues 212-242 (ESARPEEGKPQDGNPEGDKKAEKKTPDDKHK). SH3 domains are found at residues 247-306 (QQSH…RVRA) and 307-364 (GERV…LEEI).

As to quaternary structure, interacts (via SH3 domains) with the calcium channels CACNA1S and CACNA1C. Component of a calcium channel complex with CACNA1S and CACNB1. Component of a calcium channel complex with CACNA1C and CACNB1.

It is found in the cytoplasm. It localises to the cell membrane. Its subcellular location is the sarcolemma. The protein localises to the T-tubule. Functionally, required for normal excitation-contraction coupling in skeletal muscle and for normal muscle contraction in response to membrane depolarization. Required for normal Ca(2+) release from the sarcplasmic reticulum, which ultimately leads to muscle contraction. Probably functions via its effects on muscle calcium channels. Increases CACNA1S channel activity, in addition to its role in enhancing the expression of CACNA1S at the cell membrane. Has a redundant role in promoting the expression of the calcium channel CACNA1S at the cell membrane. Slows down the inactivation rate of the calcium channel CACNA1C. This Homo sapiens (Human) protein is SH3 and cysteine-rich domain-containing protein 3 (STAC3).